The sequence spans 255 residues: uncharacterized protein (255 aa).

This sequence belongs to the methyltransferase superfamily.

This is an uncharacterized protein from Mycolicibacterium vanbaalenii (strain DSM 7251 / JCM 13017 / BCRC 16820 / KCTC 9966 / NRRL B-24157 / PYR-1) (Mycobacterium vanbaalenii).